We begin with the raw amino-acid sequence, 259 residues long: uncharacterized protein (259 aa).

The N-terminal stretch at 1–28 (MNIKRRLKYLTSCLLVSAFFWINSSAWA) is a signal peptide. The next 2 membrane-spanning stretches (helical) occupy residues 32–52 (EIPPSAPWVIYLGGFGGIYVA) and 191–211 (WGFLVGFGLGYDFCPWFGIFT).

It is found in the cell membrane. This is an uncharacterized protein from Coxiella burnetii (strain RSA 493 / Nine Mile phase I).